Reading from the N-terminus, the 232-residue chain is Ribose-5-phosphate isomerase A (232 aa).

Residues 28–31 (TGST), 83–86 (DGAD), and 96–99 (KGGG) each bind substrate. Catalysis depends on Glu-105, which acts as the Proton acceptor. Residue Lys-123 participates in substrate binding.

The protein belongs to the ribose 5-phosphate isomerase family. In terms of assembly, homodimer.

It catalyses the reaction aldehydo-D-ribose 5-phosphate = D-ribulose 5-phosphate. The protein operates within carbohydrate degradation; pentose phosphate pathway; D-ribose 5-phosphate from D-ribulose 5-phosphate (non-oxidative stage): step 1/1. Functionally, catalyzes the reversible conversion of ribose-5-phosphate to ribulose 5-phosphate. This is Ribose-5-phosphate isomerase A from Rhodopseudomonas palustris (strain HaA2).